Reading from the N-terminus, the 66-residue chain is Protein translocase subunit SecE (66 aa).

A helical membrane pass occupies residues 29-49 (LVASTLVVVVAVFIFSPICLV).

This sequence belongs to the SecE/SEC61-gamma family. As to quaternary structure, component of the Sec protein translocase complex. Heterotrimer consisting of SecY, SecE and SecG subunits. The heterotrimers can form oligomers, although 1 heterotrimer is thought to be able to translocate proteins. Interacts with the ribosome. Interacts with SecDF, and other proteins may be involved. Interacts with SecA.

The protein resides in the cell inner membrane. Essential subunit of the Sec protein translocation channel SecYEG. Clamps together the 2 halves of SecY. May contact the channel plug during translocation. The chain is Protein translocase subunit SecE from Rickettsia montanensis.